Reading from the N-terminus, the 459-residue chain is tRNA modification GTPase MnmE (459 aa).

(6S)-5-formyl-5,6,7,8-tetrahydrofolate is bound by residues Arg22, Glu85, and Arg124. Positions 221 to 380 constitute a TrmE-type G domain; that stretch reads GLSTVIVGKP…LEIQIRDLFF (160 aa). Asn231 provides a ligand contact to K(+). Residues 231–236, 250–256, and 275–278 each bind GTP; these read NVGKSS, TEVAGTT, and DTAG. Residue Ser235 participates in Mg(2+) binding. Residues Thr250, Val252, and Thr255 each contribute to the K(+) site. Thr256 contributes to the Mg(2+) binding site. Residue Lys459 participates in (6S)-5-formyl-5,6,7,8-tetrahydrofolate binding.

It belongs to the TRAFAC class TrmE-Era-EngA-EngB-Septin-like GTPase superfamily. TrmE GTPase family. As to quaternary structure, homodimer. Heterotetramer of two MnmE and two MnmG subunits. It depends on K(+) as a cofactor.

It is found in the cytoplasm. Exhibits a very high intrinsic GTPase hydrolysis rate. Involved in the addition of a carboxymethylaminomethyl (cmnm) group at the wobble position (U34) of certain tRNAs, forming tRNA-cmnm(5)s(2)U34. In Staphylococcus aureus (strain USA300 / TCH1516), this protein is tRNA modification GTPase MnmE.